A 104-amino-acid chain; its full sequence is Holotricin-3 (104 aa).

The N-terminal stretch at 1 to 20 (MNKLIILGLACIIAVASAMP) is a signal peptide. Residues 22-104 (GPGDGHGGGH…HHGGYQTHGY (83 aa)) are disordered. The span at 23–97 (PGDGHGGGHG…PGGHGGGHHG (75 aa)) shows a compositional bias: gly residues. Tandem repeats lie at residues 27–30 (HGGG), 31–34 (HGGG), 35–38 (HGGG), 39–42 (HGNG), 43–46 (QGGG), 47–50 (HGHG), 51–54 (PGGG), 55–58 (FGGG), 59–62 (HGGG), 63–66 (HGGG), 67–70 (GRGG), 71–74 (GGSG), 75–78 (GGGS), 79–82 (PGHG), 83–86 (AGGG), 87–90 (YPGG), 91–94 (HGGG), and 96–98 (HGG). Positions 27–98 (HGGGHGGGHG…GGHGGGHHGG (72 aa)) are 18 X 4 AA approximate tandem repeats of H-G-G-G.

It to T.molitor tenecin 3.

It localises to the secreted. Functionally, has antifungal activity against C.albicans. This is Holotricin-3 from Holotrichia diomphalia (Korean black chafer).